The following is a 529-amino-acid chain: Heat shock protein 60 (529 aa).

The segment at 460 to 484 (YQATVQHPPPQSSYEEDGRRPPTQP) is disordered.

This chain is Heat shock protein 60, found in Giardia intestinalis (Giardia lamblia).